We begin with the raw amino-acid sequence, 456 residues long: tRNA-2-methylthio-N(6)-dimethylallyladenosine synthase (456 aa).

In terms of domain architecture, MTTase N-terminal spans 1-116; sequence MTYFFETYGC…FESIFQEIEQ (116 aa). [4Fe-4S] cluster-binding residues include Cys-10, Cys-46, Cys-79, Cys-162, Cys-166, and Cys-169. Residues 148-384 enclose the Radical SAM core domain; that stretch reads SEGSFQSFIP…IALQMSTTLK (237 aa). The TRAM domain occupies 387 to 452; the sequence is RARVGKTLPV…GRTLRAHLVQ (66 aa).

It belongs to the methylthiotransferase family. MiaB subfamily. As to quaternary structure, monomer. Requires [4Fe-4S] cluster as cofactor.

It is found in the cytoplasm. It catalyses the reaction N(6)-dimethylallyladenosine(37) in tRNA + (sulfur carrier)-SH + AH2 + 2 S-adenosyl-L-methionine = 2-methylsulfanyl-N(6)-dimethylallyladenosine(37) in tRNA + (sulfur carrier)-H + 5'-deoxyadenosine + L-methionine + A + S-adenosyl-L-homocysteine + 2 H(+). In terms of biological role, catalyzes the methylthiolation of N6-(dimethylallyl)adenosine (i(6)A), leading to the formation of 2-methylthio-N6-(dimethylallyl)adenosine (ms(2)i(6)A) at position 37 in tRNAs that read codons beginning with uridine. This chain is tRNA-2-methylthio-N(6)-dimethylallyladenosine synthase, found in Treponema pallidum (strain Nichols).